We begin with the raw amino-acid sequence, 95 residues long: Signal recognition particle 19 kDa protein (95 aa).

It belongs to the SRP19 family. As to quaternary structure, part of the signal recognition particle protein translocation system, which is composed of SRP and FtsY. Archaeal SRP consists of a 7S RNA molecule of 300 nucleotides and two protein subunits: SRP54 and SRP19.

The protein localises to the cytoplasm. Its function is as follows. Involved in targeting and insertion of nascent membrane proteins into the cytoplasmic membrane. Binds directly to 7S RNA and mediates binding of the 54 kDa subunit of the SRP. The polypeptide is Signal recognition particle 19 kDa protein (Methanococcoides burtonii (strain DSM 6242 / NBRC 107633 / OCM 468 / ACE-M)).